We begin with the raw amino-acid sequence, 441 residues long: Chromosomal replication initiator protein DnaA (441 aa).

Residues 1-80 (MQNDVLARWE…MHQEISLQFI (80 aa)) form a domain I, interacts with DnaA modulators region. The segment at 80 to 102 (ILAGQEVDQPKPKERSSEETYIN) is domain II. Positions 103–320 (ILNPRYTFDT…GALIRVSAFS (218 aa)) are domain III, AAA+ region. 4 residues coordinate ATP: glycine 147, glycine 149, lysine 150, and threonine 151. A domain IV, binds dsDNA region spans residues 321-441 (SLEQRDATPQ…IKELKKRIGE (121 aa)).

Belongs to the DnaA family. Oligomerizes as a right-handed, spiral filament on DNA at oriC.

It localises to the cytoplasm. In terms of biological role, plays an essential role in the initiation and regulation of chromosomal replication. ATP-DnaA binds to the origin of replication (oriC) to initiate formation of the DNA replication initiation complex once per cell cycle. Binds the DnaA box (a 9 base pair repeat at the origin) and separates the double-stranded (ds)DNA. Forms a right-handed helical filament on oriC DNA; dsDNA binds to the exterior of the filament while single-stranded (ss)DNA is stabiized in the filament's interior. The ATP-DnaA-oriC complex binds and stabilizes one strand of the AT-rich DNA unwinding element (DUE), permitting loading of DNA polymerase. After initiation quickly degrades to an ADP-DnaA complex that is not apt for DNA replication. Binds acidic phospholipids. In Desulforamulus reducens (strain ATCC BAA-1160 / DSM 100696 / MI-1) (Desulfotomaculum reducens), this protein is Chromosomal replication initiator protein DnaA.